Here is a 465-residue protein sequence, read N- to C-terminus: MADSVEQSSVTTKRISAKGARKRFVGTKSASGKHSQGVDRVGSAAHRPVNQIPEEILKDTKLQEALPENYNFEIHKTIWRIQQVKAKRVALQFPEGLLLFACTIADILESFTGCETVIMGDVTYGACCVDDYSARALGCDLLVHYGHSCLVPIDATAGIKMLYVFVDIKIDTAHFVESVRFNLGAGSCLALVSTIQFVAALQAASNELSKDYQVEIPQCKPLSPGEILGCTAPMLKDKDAVIYLGDGRFHLEAVMIANPAIQAYRYDPYDKTFSKEYYDIDKMHEARQTAIKQASLASKYGLILGTLGRQGSPKVLQTLEKQLQSLNMDYIIVLLSEVFPDKLKLFKDVDAWVQVACPRLSIDWGTAFPKPLLSPYEASVALQSVAWQQSYPMDFYAYSSLGGWTPNNESNRPTPANRRKKNLHTEVIIDNVSDSKPVIKESECGSGETCCGKCTKETDKHSSTP.

Over residues 1 to 14 (MADSVEQSSVTTKR) the composition is skewed to polar residues. A disordered region spans residues 1–42 (MADSVEQSSVTTKRISAKGARKRFVGTKSASGKHSQGVDRVG). Residues 15–25 (ISAKGARKRFV) show a composition bias toward basic residues. [4Fe-4S] cluster is bound by residues Cys127, Cys230, and Cys357. The tract at residues 442–465 (SECGSGETCCGKCTKETDKHSSTP) is disordered. Residues 454–465 (CTKETDKHSSTP) are compositionally biased toward basic and acidic residues.

It belongs to the DPH1/DPH2 family. DPH1 subfamily. Component of the 2-(3-amino-3-carboxypropyl)histidine synthase complex composed of dph1, dph2, dph3 and a NADH-dependent reductase. [4Fe-4S] cluster is required as a cofactor.

It carries out the reaction L-histidyl-[translation elongation factor 2] + S-adenosyl-L-methionine = 2-[(3S)-amino-3-carboxypropyl]-L-histidyl-[translation elongation factor 2] + S-methyl-5'-thioadenosine + H(+). Its pathway is protein modification; peptidyl-diphthamide biosynthesis. Its function is as follows. Catalyzes the first step of diphthamide biosynthesis, a post-translational modification of histidine which occurs in elongation factor 2. Dph1 and dph2 transfer a 3-amino-3-carboxypropyl (ACP) group from S-adenosyl-L-methionine (SAM) to a histidine residue, the reaction is assisted by a reduction system comprising dph3 and a NADH-dependent reductase. This chain is 2-(3-amino-3-carboxypropyl)histidine synthase subunit 1 (dph1), found in Nematostella vectensis (Starlet sea anemone).